The following is a 160-amino-acid chain: MPSFDIQSELNKHEVSNAVDQANREVATRFDFKGSGATYKYEGNSITLQAETDFQLKQMIDILQNKFAKRQIDVAHMKLEDPIIQHKSAQQTVMLLEGIDQTAAKKIIKLIKDQKLKVQAAIQGEKVRVTGKKRDDLQSVIGLLKEQEIGLPLQFDNFRD.

It belongs to the YajQ family.

In terms of biological role, nucleotide-binding protein. This Coxiella burnetii (strain RSA 493 / Nine Mile phase I) protein is Nucleotide-binding protein CBU_0114.